Here is a 423-residue protein sequence, read N- to C-terminus: Flavohemoprotein B (423 aa).

One can recognise a Globin domain in the interval 1 to 136 (MLSQKSIQII…VAQAFMDAEE (136 aa)). Histidine 83 serves as a coordination point for heme b. Catalysis depends on charge relay system residues tyrosine 93 and glutamate 135. Positions 149–423 (WKDTREFVVD…LRGVKNIIEN (275 aa)) are reductase. Positions 150–268 (KDTREFVVDR…SVPAGDFVVN (119 aa)) constitute an FAD-binding FR-type domain. Residues tyrosine 188 and 212-215 (RHYS) contribute to the FAD site. 281 to 286 (GVGINP) contributes to the NADP(+) binding site. 400-403 (LFGP) contributes to the FAD binding site.

Belongs to the globin family. Two-domain flavohemoproteins subfamily. The protein in the C-terminal section; belongs to the flavoprotein pyridine nucleotide cytochrome reductase family. FAD is required as a cofactor. Heme b serves as cofactor.

It is found in the cytoplasm. It carries out the reaction 2 nitric oxide + NADPH + 2 O2 = 2 nitrate + NADP(+) + H(+). The enzyme catalyses 2 nitric oxide + NADH + 2 O2 = 2 nitrate + NAD(+) + H(+). In terms of biological role, is involved in NO detoxification in an aerobic process, termed nitric oxide dioxygenase (NOD) reaction that utilizes O(2) and NAD(P)H to convert NO to nitrate, which protects the cell from various noxious nitrogen compounds. Therefore, plays a central role in the inducible response to nitrosative stress. Functionally, in the presence of oxygen and NADH, it has NADH oxidase activity, which leads to the generation of superoxide and H(2)O(2). Under anaerobic conditions, it also exhibits nitric oxide reductase and FAD reductase activities. However, all these reactions are much lower than NOD activity. The polypeptide is Flavohemoprotein B (fhbB) (Dictyostelium discoideum (Social amoeba)).